Reading from the N-terminus, the 433-residue chain is tRNA(Ile)-lysidine synthase (433 aa).

37 to 42 (SGGKDS) is an ATP binding site.

Belongs to the tRNA(Ile)-lysidine synthase family.

The protein localises to the cytoplasm. It carries out the reaction cytidine(34) in tRNA(Ile2) + L-lysine + ATP = lysidine(34) in tRNA(Ile2) + AMP + diphosphate + H(+). Its function is as follows. Ligates lysine onto the cytidine present at position 34 of the AUA codon-specific tRNA(Ile) that contains the anticodon CAU, in an ATP-dependent manner. Cytidine is converted to lysidine, thus changing the amino acid specificity of the tRNA from methionine to isoleucine. The protein is tRNA(Ile)-lysidine synthase of Leptospira interrogans serogroup Icterohaemorrhagiae serovar Lai (strain 56601).